Consider the following 750-residue polypeptide: Photosystem I P700 chlorophyll a apoprotein A1 (750 aa).

Helical transmembrane passes span 70-93 (VFSAHFGQLSIIFLWLSGMYFHGA), 156-179 (LYCTAIGALIFAALMLFAGWFHYH), 195-219 (LNHHLAGLLGLGSLSWAGHQVHVSL), 291-309 (IAHHHLAIAILFLIAGHMY), 346-369 (WHAQLSLNLAMLGSLTIIVAHHMY), 385-411 (LSLFTHHMWIGGFLIVGAAAHAAIFMV), 433-455 (AIISHLNWVCIFLGFHSFGLYIH), and 531-549 (FLVHHIHAFTIHVTVLILL). [4Fe-4S] cluster-binding residues include Cys573 and Cys582. Helical transmembrane passes span 589 to 610 (HVFLGLFWMYNAISVVIFHFSW) and 664 to 686 (LSAYGLFFLGAHFVWAFSLMFLF). Residue His675 participates in chlorophyll a' binding. Residues Met683 and Tyr691 each contribute to the chlorophyll a site. Trp692 serves as a coordination point for phylloquinone. A helical membrane pass occupies residues 724–744 (AVGVTHYLLGGIATTWAFFLA).

The protein belongs to the PsaA/PsaB family. As to quaternary structure, the PsaA/B heterodimer binds the P700 chlorophyll special pair and subsequent electron acceptors. PSI consists of a core antenna complex that captures photons, and an electron transfer chain that converts photonic excitation into a charge separation. The eukaryotic PSI reaction center is composed of at least 11 subunits. P700 is a chlorophyll a/chlorophyll a' dimer, A0 is one or more chlorophyll a, A1 is one or both phylloquinones and FX is a shared 4Fe-4S iron-sulfur center. is required as a cofactor.

It is found in the plastid. The protein resides in the chloroplast thylakoid membrane. It catalyses the reaction reduced [plastocyanin] + hnu + oxidized [2Fe-2S]-[ferredoxin] = oxidized [plastocyanin] + reduced [2Fe-2S]-[ferredoxin]. In terms of biological role, psaA and PsaB bind P700, the primary electron donor of photosystem I (PSI), as well as the electron acceptors A0, A1 and FX. PSI is a plastocyanin-ferredoxin oxidoreductase, converting photonic excitation into a charge separation, which transfers an electron from the donor P700 chlorophyll pair to the spectroscopically characterized acceptors A0, A1, FX, FA and FB in turn. Oxidized P700 is reduced on the lumenal side of the thylakoid membrane by plastocyanin. The chain is Photosystem I P700 chlorophyll a apoprotein A1 from Citrus sinensis (Sweet orange).